Here is a 94-residue protein sequence, read N- to C-terminus: Putative FXYD domain-containing ion transport regulator 8 (94 aa).

The signal sequence occupies residues 1-18; the sequence is MEVVLIFVYSLLVPVVLA. Residues 19–34 lie on the Extracellular side of the membrane; the sequence is SAAKEKEIDPFHYNYQ. Residues 35–58 traverse the membrane as a helical segment; it reads TLRIGGLVFDVVLFLVPSCHLLSH. At 59 to 94 the chain is on the cytoplasmic side; sequence RCKCSFNQKPQDPGDKEAQVENFITANAKEPQKAKN. Residues 66-94 form a disordered region; the sequence is QKPQDPGDKEAQVENFITANAKEPQKAKN.

Belongs to the FXYD family.

The protein resides in the membrane. The protein is Putative FXYD domain-containing ion transport regulator 8 (FXYD6P3) of Homo sapiens (Human).